The following is a 139-amino-acid chain: Endoribonuclease YbeY (139 aa).

The Zn(2+) site is built by H107, H111, and D117.

It belongs to the endoribonuclease YbeY family. Zn(2+) serves as cofactor.

The protein localises to the cytoplasm. Functionally, single strand-specific metallo-endoribonuclease involved in late-stage 70S ribosome quality control and in maturation of the 3' terminus of the 16S rRNA. The chain is Endoribonuclease YbeY from Bacteroides fragilis (strain ATCC 25285 / DSM 2151 / CCUG 4856 / JCM 11019 / LMG 10263 / NCTC 9343 / Onslow / VPI 2553 / EN-2).